The primary structure comprises 188 residues: Cell division protein SepF (188 aa).

The disordered stretch occupies residues 29-53 (EQQDQDQRATQADGGALATLGDSNP).

This sequence belongs to the SepF family. As to quaternary structure, homodimer. Interacts with FtsZ.

The protein localises to the cytoplasm. In terms of biological role, cell division protein that is part of the divisome complex and is recruited early to the Z-ring. Probably stimulates Z-ring formation, perhaps through the cross-linking of FtsZ protofilaments. Its function overlaps with FtsA. This Synechococcus sp. (strain CC9902) protein is Cell division protein SepF.